The chain runs to 169 residues: Superoxide dismutase [Cu-Zn] 1 (169 aa).

An N-terminal signal peptide occupies residues 1–18 (MFEQWDALCAVLFSFSIA). Cu cation contacts are provided by His-65, His-67, and His-83. Cys-72 and Cys-165 form a disulfide bridge. Zn(2+) is bound by residues His-83, His-91, His-100, and Asp-103. Residue His-145 participates in Cu cation binding.

This sequence belongs to the Cu-Zn superoxide dismutase family. Requires Cu cation as cofactor. Zn(2+) serves as cofactor.

The catalysed reaction is 2 superoxide + 2 H(+) = H2O2 + O2. Functionally, destroys radicals which are normally produced within the cells and which are toxic to biological systems. This is Superoxide dismutase [Cu-Zn] 1 (sodC1) from Aquifex aeolicus (strain VF5).